A 1331-amino-acid polypeptide reads, in one-letter code: DNA-directed RNA polymerase subunit beta' (1331 aa).

Zn(2+) is bound by residues cysteine 220, cysteine 293, cysteine 300, and cysteine 303. Disordered regions lie at residues 1236–1257 (DFVD…TNDN) and 1294–1331 (ISGD…MKDQ). Residues 1243-1257 (SRSPNGYSNVVTNDN) show a composition bias toward polar residues.

The protein belongs to the RNA polymerase beta' chain family. RpoC2 subfamily. In cyanobacteria the RNAP catalytic core is composed of 2 alpha, 1 beta, 1 beta', 1 gamma and 1 omega subunit. When a sigma factor is associated with the core the holoenzyme is formed, which can initiate transcription. The cofactor is Zn(2+).

It carries out the reaction RNA(n) + a ribonucleoside 5'-triphosphate = RNA(n+1) + diphosphate. Its function is as follows. DNA-dependent RNA polymerase catalyzes the transcription of DNA into RNA using the four ribonucleoside triphosphates as substrates. The chain is DNA-directed RNA polymerase subunit beta' from Picosynechococcus sp. (strain ATCC 27264 / PCC 7002 / PR-6) (Agmenellum quadruplicatum).